The sequence spans 295 residues: Protease HtpX (295 aa).

The next 2 membrane-spanning stretches (helical) occupy residues I4–L24 and Q42–S62. Residue H147 participates in Zn(2+) binding. E148 is a catalytic residue. H151 lines the Zn(2+) pocket. The next 2 helical transmembrane spans lie at V158 to I178 and I195 to I215. E224 serves as a coordination point for Zn(2+).

This sequence belongs to the peptidase M48B family. The cofactor is Zn(2+).

The protein localises to the cell inner membrane. The protein is Protease HtpX of Pseudomonas fluorescens (strain SBW25).